The following is a 696-amino-acid chain: Polyribonucleotide nucleotidyltransferase (696 aa).

Positions 483 and 489 each coordinate Mg(2+). The KH domain occupies 550–609; sequence PRITTIWVKVDKIRDVIGSGGKNIRSVTEATGVSIDIDDTGKINIASTNKEACDLAIKMI. The region spanning 619-687 is the S1 motif domain; that stretch reads GKLYMGTVKK…KQGKIKLSRK (69 aa).

The protein belongs to the polyribonucleotide nucleotidyltransferase family. The cofactor is Mg(2+).

Its subcellular location is the cytoplasm. It carries out the reaction RNA(n+1) + phosphate = RNA(n) + a ribonucleoside 5'-diphosphate. Involved in mRNA degradation. Catalyzes the phosphorolysis of single-stranded polyribonucleotides processively in the 3'- to 5'-direction. This is Polyribonucleotide nucleotidyltransferase from Citrifermentans bemidjiense (strain ATCC BAA-1014 / DSM 16622 / JCM 12645 / Bem) (Geobacter bemidjiensis).